The chain runs to 436 residues: Antilisterial bacteriocin subtilosin biosynthesis protein AlbD (436 aa).

10 helical membrane-spanning segments follow: residues 27–47, 51–71, 112–132, 134–154, 166–186, 187–207, 240–260, 270–290, 315–335, and 395–415; these read IAAGLVILAVFEIGLIRQAGI, VLGKTYIILALLLMNTYMVFL, TLFFFILPLFLFGNGTLSGAQ, LFWLGRFSFFTVYSILFGVML, FLLHAAVFAFVCLSAAFMPAV, TIPLCAVHMLWAVIIDFPVFL, AMLLNYVVMAAFSGFFSFQMM, IYIVISALLLICSPIALLYSI, FYSGLLAGGFLLVAIIVGFIS, and ATLAGTAVSLAVIPIAALIIV.

The protein localises to the cell membrane. Involved in the production of the bacteriocin subtilosin. Required for immunity to subtilosin. The sequence is that of Antilisterial bacteriocin subtilosin biosynthesis protein AlbD (albD) from Bacillus subtilis.